Reading from the N-terminus, the 138-residue chain is Small ribosomal subunit protein uS11 (138 aa).

The segment covering 1 to 12 has biased composition (low complexity); sequence MPPKKAAASSAK. Residues 1 to 28 form a disordered region; the sequence is MPPKKAAASSAKKGQKTRRREKKNVPHG. The segment covering 13-22 has biased composition (basic residues); sequence KGQKTRRREK.

This sequence belongs to the universal ribosomal protein uS11 family. As to quaternary structure, part of the 30S ribosomal subunit. Interacts with proteins S7 and S18. Binds to IF-3.

Located on the platform of the 30S subunit, it bridges several disparate RNA helices of the 16S rRNA. Forms part of the Shine-Dalgarno cleft in the 70S ribosome. This Mycobacterium sp. (strain JLS) protein is Small ribosomal subunit protein uS11.